The following is a 129-amino-acid chain: ATP synthase epsilon chain (129 aa).

It belongs to the ATPase epsilon chain family. F-type ATPases have 2 components, CF(1) - the catalytic core - and CF(0) - the membrane proton channel. CF(1) has five subunits: alpha(3), beta(3), gamma(1), delta(1), epsilon(1). CF(0) has three main subunits: a, b and c.

The protein localises to the cell inner membrane. In terms of biological role, produces ATP from ADP in the presence of a proton gradient across the membrane. This chain is ATP synthase epsilon chain, found in Campylobacter concisus (strain 13826).